The chain runs to 474 residues: ATP synthase subunit beta (474 aa).

An ATP-binding site is contributed by 155-162 (GGAGVGKT).

Belongs to the ATPase alpha/beta chains family. In terms of assembly, F-type ATPases have 2 components, CF(1) - the catalytic core - and CF(0) - the membrane proton channel. CF(1) has five subunits: alpha(3), beta(3), gamma(1), delta(1), epsilon(1). CF(0) has three main subunits: a(1), b(2) and c(9-12). The alpha and beta chains form an alternating ring which encloses part of the gamma chain. CF(1) is attached to CF(0) by a central stalk formed by the gamma and epsilon chains, while a peripheral stalk is formed by the delta and b chains.

The protein localises to the cell inner membrane. The enzyme catalyses ATP + H2O + 4 H(+)(in) = ADP + phosphate + 5 H(+)(out). In terms of biological role, produces ATP from ADP in the presence of a proton gradient across the membrane. The catalytic sites are hosted primarily by the beta subunits. This Sorangium cellulosum (strain So ce56) (Polyangium cellulosum (strain So ce56)) protein is ATP synthase subunit beta.